A 163-amino-acid chain; its full sequence is Lysosomal enzyme trafficking factor (163 aa).

Helical transmembrane passes span 40–60 and 98–118; these read MGWI…YYVF and LPFW…FLFL.

Belongs to the LYSET family. In terms of assembly, interacts with GNPTAB; this interaction is important for proper localization of GNPTAB in Golgi stacks. Interacts with MBTPS1.

Its subcellular location is the golgi apparatus membrane. In terms of biological role, required for mannose-6-phosphate-dependent trafficking of lysosomal enzymes. LYSET bridges GlcNAc-1-phosphate transferase (GNPTAB), to the membrane-bound transcription factor site-1 protease (MBTPS1), thus allowing proteolytic activation of the GNPTAB. GNPTAB is involved in the regulation of M6P-dependent Golgi-to-lysosome trafficking of lysosomal enzymes. LYSET is thus an essential factor for maturation and delivery of lysosomal hydrolases. This Bos taurus (Bovine) protein is Lysosomal enzyme trafficking factor (LYSET).